Here is a 79-residue protein sequence, read N- to C-terminus: RNA-binding protein Hfq (79 aa).

A Sm domain is found at 9–69; sequence DTFLNHLRKE…ISTFTPQRPV (61 aa).

The protein belongs to the Hfq family. As to quaternary structure, homohexamer.

Functionally, RNA chaperone that binds small regulatory RNA (sRNAs) and mRNAs to facilitate mRNA translational regulation in response to envelope stress, environmental stress and changes in metabolite concentrations. Also binds with high specificity to tRNAs. The sequence is that of RNA-binding protein Hfq from Brevibacillus brevis (strain 47 / JCM 6285 / NBRC 100599).